The chain runs to 362 residues: C-C chemokine receptor type 10 (362 aa).

Topologically, residues 1 to 48 (MGTKPTEQVSWGLYSGYDEEAYSVGPLPELCYKADVQAFSRAFQPSVS) are extracellular. The chain crosses the membrane as a helical span at residues 49 to 69 (LMVAVLGLAGNGLVLATHLAA). Topologically, residues 70–80 (RRTTRSPTSVH) are cytoplasmic. A helical transmembrane segment spans residues 81–101 (LLQLALADLLLALTLPFAAAG). At 102-115 (ALQGWNLGSTTCRA) the chain is on the extracellular side. C113 and C191 are disulfide-bonded. Residues 116–136 (ISGLYSASFHAGFLFLACISA) traverse the membrane as a helical segment. At 137-159 (DRYVAIARALPAGQRPSTPSRAH) the chain is on the cytoplasmic side. The chain crosses the membrane as a helical span at residues 160–180 (LVSVFVWLLSLFLALPALLFS). Over 181–208 (RDGPREGQRRCRLIFPESLTQTVKGASA) the chain is Extracellular. Residues 209 to 229 (VAQVVLGFALPLGVMAACYAL) form a helical membrane-spanning segment. At 230–247 (LGRTLLAARGPERRRALR) the chain is on the cytoplasmic side. A helical transmembrane segment spans residues 248–268 (VVVALVVAFVVLQLPYSLALL). At 269-291 (LDTADLLAARERSCSSSKRKDLA) the chain is on the extracellular side. A helical membrane pass occupies residues 292 to 312 (LLVTGGLTLVRCSLNPVLYAF). The Cytoplasmic portion of the chain corresponds to 313–362 (LGLRFRRDLRRLLQGGGCSPKPNPRGRCPRRLRLSSCSAPTETHSLSWDN).

The protein belongs to the G-protein coupled receptor 1 family. As to expression, expressed at high levels in small intestine, colon, lymph nodes, Peyer patches and at lower levels in thymus, lung and spleen.

The protein resides in the cell membrane. Receptor for chemokines SCYA27 and SCYA28. Subsequently transduces a signal by increasing the intracellular calcium ions level. In Mus musculus (Mouse), this protein is C-C chemokine receptor type 10 (Ccr10).